The primary structure comprises 196 residues: Imidazoleglycerol-phosphate dehydratase (196 aa).

It belongs to the imidazoleglycerol-phosphate dehydratase family.

The protein localises to the cytoplasm. The enzyme catalyses D-erythro-1-(imidazol-4-yl)glycerol 3-phosphate = 3-(imidazol-4-yl)-2-oxopropyl phosphate + H2O. It functions in the pathway amino-acid biosynthesis; L-histidine biosynthesis; L-histidine from 5-phospho-alpha-D-ribose 1-diphosphate: step 6/9. The chain is Imidazoleglycerol-phosphate dehydratase from Acidiphilium cryptum (strain JF-5).